The following is a 425-amino-acid chain: Serine--tRNA ligase (425 aa).

228 to 230 (TAE) is an L-serine binding site. Position 259-261 (259-261 (RSE)) interacts with ATP. Glutamate 282 contacts L-serine. 346-349 (EIAS) contacts ATP. Serine 382 is an L-serine binding site.

The protein belongs to the class-II aminoacyl-tRNA synthetase family. Type-1 seryl-tRNA synthetase subfamily. In terms of assembly, homodimer. The tRNA molecule binds across the dimer.

It localises to the cytoplasm. It carries out the reaction tRNA(Ser) + L-serine + ATP = L-seryl-tRNA(Ser) + AMP + diphosphate + H(+). The enzyme catalyses tRNA(Sec) + L-serine + ATP = L-seryl-tRNA(Sec) + AMP + diphosphate + H(+). It participates in aminoacyl-tRNA biosynthesis; selenocysteinyl-tRNA(Sec) biosynthesis; L-seryl-tRNA(Sec) from L-serine and tRNA(Sec): step 1/1. Catalyzes the attachment of serine to tRNA(Ser). Is also able to aminoacylate tRNA(Sec) with serine, to form the misacylated tRNA L-seryl-tRNA(Sec), which will be further converted into selenocysteinyl-tRNA(Sec). This Rickettsia akari (strain Hartford) protein is Serine--tRNA ligase.